The chain runs to 335 residues: Serine protease 42 (335 aa).

Residues 1 to 24 form the signal peptide; that stretch reads MASGGGSLGLIVFLLLLQPKPCEA. N-linked (GlcNAc...) asparagine glycosylation occurs at Asn-67. In terms of domain architecture, Peptidase S1 spans 79-315; that stretch reads IMGGVDAEEG…YSKWLIAVVN (237 aa). Cys-104 and Cys-120 are disulfide-bonded. Catalysis depends on His-119, which acts as the Charge relay system. N-linked (GlcNAc...) asparagine glycosylation occurs at Asn-140. Asp-165 serves as the catalytic Charge relay system. Asn-176 is a glycosylation site (N-linked (GlcNAc...) asparagine). Disulfide bonds link Cys-199/Cys-273, Cys-232/Cys-253, and Cys-263/Cys-291. The active-site Charge relay system is the Ser-267.

It belongs to the peptidase S1 family. Testis-specific. Mainly detected in round spermatids at all the eminiferous epithelial stages (at protein level).

The protein resides in the cytoplasm. It localises to the cell membrane. Its function is as follows. Plays a role in spermatogenesis. Involved in germ cell survival during meiosis. Lacks protease activity in vitro. This Mus musculus (Mouse) protein is Serine protease 42.